A 369-amino-acid polypeptide reads, in one-letter code: Phenylalanine--tRNA ligase alpha subunit (369 aa).

Glutamate 272 provides a ligand contact to Mg(2+).

This sequence belongs to the class-II aminoacyl-tRNA synthetase family. Phe-tRNA synthetase alpha subunit type 1 subfamily. As to quaternary structure, tetramer of two alpha and two beta subunits. Mg(2+) is required as a cofactor.

It is found in the cytoplasm. It carries out the reaction tRNA(Phe) + L-phenylalanine + ATP = L-phenylalanyl-tRNA(Phe) + AMP + diphosphate + H(+). This is Phenylalanine--tRNA ligase alpha subunit from Cutibacterium acnes (strain DSM 16379 / KPA171202) (Propionibacterium acnes).